We begin with the raw amino-acid sequence, 337 residues long: DnaJ homolog dnj-2 (337 aa).

A helical transmembrane segment spans residues 4 to 24 (AIAAPILFLLVSFFVQECESV). Residues 36-105 (NCYDVLEVNR…EAKTNYDYYL (70 aa)) enclose the J domain. The next 2 membrane-spanning stretches (helical) occupy residues 127 to 147 (VDLRIVIVGTILIISLFQFLS) and 222 to 242 (LAWHTIIFPLTIFRYIKWTAL). Residues 293 to 323 (LKRNCATWKAERDAAEQEKMAQSGRYKRYKR) adopt a coiled-coil conformation.

Belongs to the DNAJC25 family.

The protein localises to the membrane. This chain is DnaJ homolog dnj-2 (dnj-2), found in Caenorhabditis elegans.